Consider the following 154-residue polypeptide: Aspartate carbamoyltransferase regulatory chain (154 aa).

C109, C114, C138, and C141 together coordinate Zn(2+).

The protein belongs to the PyrI family. Contains catalytic and regulatory chains. The cofactor is Zn(2+).

Involved in allosteric regulation of aspartate carbamoyltransferase. The chain is Aspartate carbamoyltransferase regulatory chain from Photobacterium profundum (strain SS9).